A 281-amino-acid polypeptide reads, in one-letter code: Bifunctional protein FolD (281 aa).

NADP(+) contacts are provided by residues 165–167, threonine 192, and valine 233; that span reads GRG.

Belongs to the tetrahydrofolate dehydrogenase/cyclohydrolase family. In terms of assembly, homodimer.

The enzyme catalyses (6R)-5,10-methylene-5,6,7,8-tetrahydrofolate + NADP(+) = (6R)-5,10-methenyltetrahydrofolate + NADPH. The catalysed reaction is (6R)-5,10-methenyltetrahydrofolate + H2O = (6R)-10-formyltetrahydrofolate + H(+). The protein operates within one-carbon metabolism; tetrahydrofolate interconversion. In terms of biological role, catalyzes the oxidation of 5,10-methylenetetrahydrofolate to 5,10-methenyltetrahydrofolate and then the hydrolysis of 5,10-methenyltetrahydrofolate to 10-formyltetrahydrofolate. The chain is Bifunctional protein FolD from Mycobacterium avium (strain 104).